The primary structure comprises 214 residues: Probable transaldolase (214 aa).

Lysine 83 (schiff-base intermediate with substrate) is an active-site residue.

It belongs to the transaldolase family. Type 3B subfamily.

Its subcellular location is the cytoplasm. The enzyme catalyses D-sedoheptulose 7-phosphate + D-glyceraldehyde 3-phosphate = D-erythrose 4-phosphate + beta-D-fructose 6-phosphate. The protein operates within carbohydrate degradation; pentose phosphate pathway; D-glyceraldehyde 3-phosphate and beta-D-fructose 6-phosphate from D-ribose 5-phosphate and D-xylulose 5-phosphate (non-oxidative stage): step 2/3. Functionally, transaldolase is important for the balance of metabolites in the pentose-phosphate pathway. This Geobacter sulfurreducens (strain ATCC 51573 / DSM 12127 / PCA) protein is Probable transaldolase.